The following is a 30-amino-acid chain: Protein Tat (30 aa).

The tract at residues 1 to 30 (PLPTTRGNPTGPKESKKEVESKTETDPFAW) is disordered. Positions 6–8 (RGN) match the Cell attachment site motif. Residues 13–30 (KESKKEVESKTETDPFAW) show a composition bias toward basic and acidic residues.

It belongs to the lentiviruses Tat family. In terms of assembly, interacts with host CCNT1. Associates with the P-TEFb complex composed at least of Tat, P-TEFb (CDK9 and CCNT1), TAR RNA, RNA Pol II. Recruits the HATs CREBBP, TAF1/TFIID, EP300, PCAF and GCN5L2. Interacts with host KAT5/Tip60; this interaction targets the latter to degradation. Interacts with the host deacetylase SIRT1. Interacts with host capping enzyme RNGTT; this interaction stimulates RNGTT. Binds to host KDR, and to the host integrins ITGAV/ITGB3 and ITGA5/ITGB1. Interacts with host KPNB1/importin beta-1 without previous binding to KPNA1/importin alpha-1. Interacts with EIF2AK2. Interacts with host nucleosome assembly protein NAP1L1; this interaction may be required for the transport of Tat within the nucleus, since the two proteins interact at the nuclear rim. Interacts with host C1QBP/SF2P32; this interaction involves lysine-acetylated Tat. Interacts with the host chemokine receptors CCR2, CCR3 and CXCR4. Interacts with host DPP4/CD26; this interaction may trigger an anti-proliferative effect. Interacts with host LDLR. Interacts with the host extracellular matrix metalloproteinase MMP1. Interacts with host PRMT6; this interaction mediates Tat's methylation. Interacts with, and is ubiquitinated by MDM2/Hdm2. Interacts with host PSMC3 and HTATIP2. Interacts with STAB1; this interaction may overcome SATB1-mediated repression of IL2 and IL2RA (interleukin) in T cells by binding to the same domain than HDAC1. Interacts (when acetylated on Lys-50 and Lys-51) with human CDK13, thereby increasing HIV-1 mRNA splicing and promoting the production of the doubly spliced HIV-1 protein Nef. Acetylation by EP300, CREBBP, GCN5L2/GCN5 and PCAF regulates the transactivation activity of Tat. EP300-mediated acetylation of Lys-50 promotes dissociation of Tat from the TAR RNA through the competitive binding to PCAF's bromodomain. In addition, the non-acetylated Tat's N-terminus can also interact with PCAF. PCAF-mediated acetylation of Lys-28 enhances Tat's binding to CCNT1. Lys-50 is deacetylated by SIRT1. In terms of processing, phosphorylated by EIF2AK2 on serine and threonine residues adjacent to the basic region important for TAR RNA binding and function. Phosphorylation of Tat by EIF2AK2 is dependent on the prior activation of EIF2AK2 by dsRNA. Post-translationally, asymmetrical arginine methylation by host PRMT6 seems to diminish the transactivation capacity of Tat and affects the interaction with host CCNT1. Polyubiquitination by MDM2 does not target Tat to degradation, but activates its transactivation function and fosters interaction with CCNT1 and TAR RNA.

Its subcellular location is the host nucleus. It localises to the host nucleolus. The protein localises to the host cytoplasm. The protein resides in the secreted. Functionally, transcriptional activator that increases RNA Pol II processivity, thereby increasing the level of full-length viral transcripts. Recognizes a hairpin structure at the 5'-LTR of the nascent viral mRNAs referred to as the transactivation responsive RNA element (TAR) and recruits the cyclin T1-CDK9 complex (P-TEFb complex) that will in turn hyperphosphorylate the RNA polymerase II to allow efficient elongation. The CDK9 component of P-TEFb and other Tat-activated kinases hyperphosphorylate the C-terminus of RNA Pol II that becomes stabilized and much more processive. Other factors such as HTATSF1/Tat-SF1, SUPT5H/SPT5, and HTATIP2 are also important for Tat's function. Besides its effect on RNA Pol II processivity, Tat induces chromatin remodeling of proviral genes by recruiting the histone acetyltransferases (HATs) CREBBP, EP300 and PCAF to the chromatin. This also contributes to the increase in proviral transcription rate, especially when the provirus integrates in transcriptionally silent region of the host genome. To ensure maximal activation of the LTR, Tat mediates nuclear translocation of NF-kappa-B by interacting with host RELA. Through its interaction with host TBP, Tat may also modulate transcription initiation. Tat can reactivate a latently infected cell by penetrating in it and transactivating its LTR promoter. In the cytoplasm, Tat is thought to act as a translational activator of HIV-1 mRNAs. Extracellular circulating Tat can be endocytosed by surrounding uninfected cells via the binding to several surface receptors such as CD26, CXCR4, heparan sulfate proteoglycans (HSPG) or LDLR. Neurons are rarely infected, but they internalize Tat via their LDLR. Endosomal low pH allows Tat to cross the endosome membrane to enter the cytosol and eventually further translocate into the nucleus, thereby inducing severe cell dysfunctions ranging from cell activation to cell death. Through its interaction with nuclear HATs, Tat is potentially able to control the acetylation-dependent cellular gene expression. Tat seems to inhibit the HAT activity of KAT5/Tip60 and TAF1, and consequently modify the expression of specific cellular genes. Modulates the expression of many cellular genes involved in cell survival, proliferation or in coding for cytokines (such as IL10) or cytokine receptors. May be involved in the derepression of host interleukin IL2 expression. Mediates the activation of cyclin-dependent kinases and dysregulation of microtubule network. Tat plays a role in T-cell and neurons apoptosis. Tat induced neurotoxicity and apoptosis probably contribute to neuroAIDS. Host extracellular matrix metalloproteinase MMP1 cleaves Tat and decreases Tat's mediated neurotoxicity. Circulating Tat also acts as a chemokine-like and/or growth factor-like molecule that binds to specific receptors on the surface of the cells, affecting many cellular pathways. In the vascular system, Tat binds to ITGAV/ITGB3 and ITGA5/ITGB1 integrins dimers at the surface of endothelial cells and competes with bFGF for heparin-binding sites, leading to an excess of soluble bFGF. Binds to KDR/VEGFR-2. All these Tat-mediated effects enhance angiogenesis in Kaposi's sarcoma lesions. This Human immunodeficiency virus type 1 group M subtype A (isolate Z321) (HIV-1) protein is Protein Tat.